Here is a 329-residue protein sequence, read N- to C-terminus: Porphobilinogen deaminase (329 aa).

Cysteine 250 is subject to S-(dipyrrolylmethanemethyl)cysteine.

Belongs to the HMBS family. As to quaternary structure, monomer. Requires dipyrromethane as cofactor.

It catalyses the reaction 4 porphobilinogen + H2O = hydroxymethylbilane + 4 NH4(+). It functions in the pathway porphyrin-containing compound metabolism; protoporphyrin-IX biosynthesis; coproporphyrinogen-III from 5-aminolevulinate: step 2/4. Its function is as follows. Tetrapolymerization of the monopyrrole PBG into the hydroxymethylbilane pre-uroporphyrinogen in several discrete steps. The chain is Porphobilinogen deaminase from Burkholderia pseudomallei (strain 668).